The primary structure comprises 528 residues: Golgi resident protein GCP60 (528 aa).

Residues 1-71 are disordered; the sequence is MAAVLNAERL…EAAAGGAAEE (71 aa). At alanine 2 the chain carries N-acetylalanine; in Golgi resident protein GCP60, N-terminally processed. The residue at position 13 (serine 13) is a Phosphoserine. Threonine 18 bears the Phosphothreonine mark. Phosphoserine is present on residues serine 20, serine 43, and serine 47. Residues 34–45 show a composition bias toward pro residues; the sequence is LLPPPLPPPSPP. The span at 54–69 shows a compositional bias: low complexity; sequence SGEQPEPGEAAAGGAA. An ACB domain is found at 83 to 174; the sequence is LEELYGLALR…LNRCCHLFST (92 aa). The stretch at 174-257 forms a coiled coil; sequence TYVASHKIEK…AALNSQTAVQ (84 aa). Positions 182–230 are disordered; sequence EKEEQEKKRKEEEERRRREEEERERLQKEEEKRRREEEERLRREEEERR. Positions 182–240 are charged amino-acid region (CAR); sequence EKEEQEKKRKEEEERRRREEEERERLQKEEEKRRREEEERLRREEEERRRIEEERLRLE. Positions 241 to 308 are q domain; Interaction with PI4KB, TBC1D22A and TBC1D22B; sequence QQKQQIMAAL…QQQAALQKQQ (68 aa). The interval 335–362 is disordered; sequence NGQAKTHTDSSEKELEPEAAEEALENGP. Residues 340-350 are compositionally biased toward basic and acidic residues; it reads THTDSSEKELE. A GOLD domain is found at 384-526; it reads KEKIQQDADS…SKSVYYRVYY (143 aa). The membrane-binding stretch occupies residues 514–516; the sequence is LWR.

As to quaternary structure, homodimer. Interacts with the C-terminal cytoplasmic domain of giantin/GOLGB1. Interacts with PBR and PKA regulatory subunit RI-alpha. Does not interact with PKA regulatory subunit RI-beta nor PKA regulatory subunit RII-alpha. Interacts (via Q domain) with PI4KB (via N-terminus). Interacts (via Q domain) with TBC1D22A and TBC1D22B; interactions with PI4KB and with TBC1D22A and TBC1D22B are mutually exclusive. Interacts with C10ORF76 and RAB11B. (Microbial infection) Interacts (via GOLD domain) with 3A proteins from various picornaviruses, including poliovirus, enterovirus A71, enterovirus D68, hepatitis A virus, human parechovirus 1, poliovirus, Human rhinovirus-14 (Hrv-14), coysackievirus B2, coysackievirus B3, coysackievirus B5, Aichi virus and human klassevirus. Interacts (via GOLD domain) with Aichi virus protein 3A; this interaction allows the formation of a 3A/ACBD3/PI4KB complex in order to synthesize PI4P at the viral RNA replication sites. Interacts with Aichi virus protein 2B. Interacts with Aichi virus protein 2C. In terms of tissue distribution, ubiquitous, with highest expression in testis and ovary.

It localises to the golgi apparatus membrane. The protein resides in the mitochondrion. Involved in the maintenance of Golgi structure by interacting with giantin, affecting protein transport between the endoplasmic reticulum and Golgi. Involved in hormone-induced steroid biosynthesis in testicular Leydig cells. Recruits PI4KB to the Golgi apparatus membrane; enhances the enzyme activity of PI4KB activity via its membrane recruitment thereby increasing the local concentration of the substrate in the vicinity of the kinase. Its function is as follows. (Microbial infection) Plays an essential role in Aichi virus RNA replication by recruiting PI4KB at the viral replication sites. The polypeptide is Golgi resident protein GCP60 (ACBD3) (Homo sapiens (Human)).